The following is a 56-amino-acid chain: Large ribosomal subunit protein bL32 (56 aa).

The segment at 1–34 is disordered; sequence MAVQQNKPSRSKRGMRRAHDALKTSTISVDKTSG.

It belongs to the bacterial ribosomal protein bL32 family.

The polypeptide is Large ribosomal subunit protein bL32 (Baumannia cicadellinicola subsp. Homalodisca coagulata).